The sequence spans 3021 residues: Genome polyprotein (3021 aa).

Position 2 is an N-acetylserine; by host (Ser-2). An interaction with STAT1 region spans residues Ser-2–Lys-23. Positions Ser-2–Pro-58 are interaction with EIF2AK2/PKR. Positions Ser-2–Arg-59 are interaction with DDX3X. Residues Ser-2–Ser-75 form a disordered region. Residues Ser-2–Asn-168 are Cytoplasmic-facing. 2 consecutive short sequence motifs (nuclear localization signal) follow at residues Pro-5–Arg-13 and Pro-38–Arg-43. Residues Pro-7 to Ile-16 are compositionally biased toward basic residues. Ser-53 carries the phosphoserine; by host modification. Short sequence motifs (nuclear localization signal) lie at residues Pro-58 to Pro-64 and Pro-66 to Ser-71. Residues Pro-58–Ala-68 are compositionally biased toward basic residues. Ser-99 bears the Phosphoserine; by host mark. An important for endoplasmic reticulum and mitochondrial localization region spans residues Pro-112–Ala-152. Residue Ser-116 is modified to Phosphoserine; by host PKA. Residues Val-122–Ser-173 form an interaction with APOA2 region. Positions Phe-164–Gly-167 are important for lipid droplets localization. Residues Leu-169–Ala-189 form a helical membrane-spanning segment. The propeptide at Leu-178 to Ser-191 is ER anchor for the core protein, removed in mature form by host signal peptidase. Over Ala-190 to Gly-358 the chain is Lumenal. Residues Asn-196, Asn-209, and Asn-234 are each glycosylated (N-linked (GlcNAc...) asparagine; by host). The tract at residues Leu-265–Arg-296 is important for fusion. Asn-305 is a glycosylation site (N-linked (GlcNAc...) asparagine; by host). A helical transmembrane segment spans residues Leu-359 to Ser-379. Residues Gly-380–Leu-731 lie on the Lumenal side of the membrane. The segment at Thr-385–Gln-412 is HVR1. N-linked (GlcNAc...) (high mannose) asparagine; by host glycosylation is found at Asn-417, Asn-423, and Asn-430. Cystine bridges form between Cys-429–Cys-553, Cys-452–Cys-459, Cys-487–Cys-495, and Cys-504–Cys-509. N-linked (GlcNAc...) asparagine; by host glycosylation is present at Asn-448. An HVR2 region spans residues Asp-474–Gly-479. N-linked (GlcNAc...) asparagine; by host glycosylation occurs at Asn-476. The CD81-binding 1 stretch occupies residues Ser-481–Pro-494. A glycan (N-linked (GlcNAc...) asparagine; by host) is linked at Asn-533. Positions Pro-545–Gly-552 are CD81-binding 2. Residue Asn-557 is glycosylated (N-linked (GlcNAc...) asparagine; by host). Cys-565 and Cys-570 form a disulfide bridge. N-linked (GlcNAc...) asparagine; by host glycosylation is present at Asn-578. 3 disulfide bridges follow: Cys-587–Cys-591, Cys-603–Cys-626, and Cys-613–Cys-650. Asn-651 carries an N-linked (GlcNAc...) (high mannose) asparagine; by host glycan. A disulfide bond links Cys-658 and Cys-683. The PKR/eIF2-alpha phosphorylation homology domain (PePHD) stretch occupies residues Ser-666–Glu-677. A helical transmembrane segment spans residues Leu-732 to Ala-752. The Lumenal portion of the chain corresponds to Ala-753–Val-763. The chain crosses the membrane as a helical span at residues Ala-764–Val-784. Topologically, residues Arg-785–Lys-787 are cytoplasmic. A helical membrane pass occupies residues Leu-788 to Leu-809. Residues Pro-810 to Glu-819 lie on the Lumenal side of the membrane. The helical transmembrane segment at Asp-820–Trp-840 threads the bilayer. Residues Tyr-841–Trp-844 are Cytoplasmic-facing. A helical membrane pass occupies residues Ile-845 to His-864. Residues Val-865–Tyr-887 lie on the Lumenal side of the membrane. A helical transmembrane segment spans residues Pro-888 to Ile-908. One can recognise a Peptidase C18 domain in the interval Leu-905–Leu-1032. Topologically, residues Gln-909 to Thr-1663 are cytoplasmic. Residues Ala-910–Arg-1212 are protease NS2-3. Cys-928 carries the S-palmitoyl cysteine; by host lipid modification. The interaction with host SCPS1 stretch occupies residues Ile-935 to Leu-955. Catalysis depends on for protease NS2 activity; shared with dimeric partner residues His-958, Glu-978, and Cys-999. The region spanning Ala-1033–Pro-1214 is the Peptidase S29 domain. Catalysis depends on charge relay system; for serine protease NS3 activity residues His-1089 and Asp-1113. The Zn(2+) site is built by Cys-1129 and Cys-1131. Catalysis depends on Ser-1171, which acts as the Charge relay system; for serine protease NS3 activity. Zn(2+)-binding residues include Cys-1177 and His-1181. One can recognise a Helicase ATP-binding domain in the interval Pro-1223–Ser-1375. Residue Ala-1236–Ser-1243 coordinates ATP. Residues Ser-1243 and Glu-1323 each contribute to the Mg(2+) site. Residues Asp-1322–His-1325 carry the DECH box motif. The region spanning Tyr-1382 to Arg-1544 is the Helicase C-terminal domain. The tract at residues Gln-1492–Thr-1504 is RNA-binding. A helical transmembrane segment spans residues Ser-1664–Gly-1684. The NS3-binding stretch occupies residues Cys-1685–Gly-1696. Residues Cys-1685–Gln-1811 lie on the Cytoplasmic side of the membrane. A helical transmembrane segment spans residues Thr-1812–Gln-1830. Residues Ser-1831–Ala-1834 are Lumenal-facing. Residues Phe-1835–Leu-1855 form a helical membrane-spanning segment. A topological domain (cytoplasmic) is located at residue Asp-1856. Residues Ile-1857 to Gly-1877 form a helical membrane-spanning segment. Over Glu-1878–Asn-1887 the chain is Lumenal. Residues Leu-1888–Leu-1908 form a helical membrane-spanning segment. The Cytoplasmic portion of the chain corresponds to Arg-1909–Cys-1978. Cys-1978 carries S-palmitoyl cysteine; by host lipidation. An intramembrane segment occupies Ser-1979–Ala-2008. Residues Leu-2009–Arg-3000 are Cytoplasmic-facing. 4 residues coordinate Zn(2+): Cys-2017, Cys-2035, Cys-2037, and Cys-2058. Positions Glu-2126–Ala-2214 are FKBP8-binding. The transcriptional activation stretch occupies residues Glu-2126–Thr-2338. Residues Pro-2141–Pro-2145 form an interaction with non-structural protein 4A region. The segment at Ala-2193–Pro-2215 is disordered. Residues Arg-2195–Glu-2448 are interaction with host SKP2. A phosphoserine; by host mark is found at Ser-2200, Ser-2203, Ser-2207, Ser-2210, Ser-2213, and Ser-2216. Residues Ser-2200–Pro-2215 are compositionally biased toward low complexity. The interval Ser-2216–Lys-2255 is ISDR. The segment at Ser-2216–Phe-2281 is interaction with EIF2AK2/PKR. The NS4B-binding stretch occupies residues Lys-2255–Tyr-2312. Positions Asp-2305 to Pro-2387 are V3. The short motif at Pro-2328 to Pro-2331 is the SH3-binding element. The Nuclear localization signal motif lies at Pro-2333–Leu-2341. Residue Lys-2356 forms a Glycyl lysine isopeptide (Lys-Gly) (interchain with G-Cter in ubiquitin) linkage. The tract at residues Lys-2356–Ser-2417 is disordered. Composition is skewed to low complexity over residues Pro-2359–Ser-2381 and Gly-2388–Pro-2401. Ser-2459 and Ser-2472 each carry phosphoserine; by host. The region spanning Pro-2644–Asp-2762 is the RdRp catalytic domain. Positions 2650, 2748, and 2749 each coordinate Mg(2+). A helical transmembrane segment spans residues His-3001–Arg-3021.

This sequence belongs to the hepacivirus polyprotein family. Homooligomer. Interacts with E1 (via C-terminus). Interacts with the non-structural protein 5A. Interacts (via N-terminus) with host STAT1 (via SH2 domain); this interaction results in decreased STAT1 phosphorylation and ubiquitin-mediated proteasome-dependent STAT1 degradation, leading to decreased IFN-stimulated gene transcription. Interacts with host STAT3; this interaction constitutively activates STAT3. Interacts with host LTBR receptor. Interacts with host TNFRSF1A receptor and possibly induces apoptosis. Interacts with host HNRPK. Interacts with host YWHAE. Interacts with host UBE3A/E6AP. Interacts with host DDX3X. Interacts with host APOA2. Interacts with host RXRA protein. Interacts with host SP110 isoform 3/Sp110b; this interaction sequesters the transcriptional corepressor SP110 away from the nucleus. Interacts with host CREB3 nuclear transcription protein; this interaction triggers cell transformation. Interacts with host ACY3. Interacts with host C1QR1. Interacts with host RBM24; this interaction, which enhances the interaction of the mature core protein with 5'-UTR, may inhibit viral translation and favor replication. Interacts with host EIF2AK2/PKR; this interaction induces the autophosphorylation of EIF2AK2. Part of the viral assembly initiation complex composed of NS2, E1, E2, NS3, NS4A, NS5A and the mature core protein. As to quaternary structure, forms a heterodimer with envelope glycoprotein E2. Interacts with mature core protein. Interacts with protease NS2. The heterodimer E1/E2 interacts with host CLDN1; this interaction plays a role in viral entry into host cell. Interacts with host SPSB2 (via C-terminus). Part of the viral assembly initiation complex composed of NS2, E1, E2, NS3, NS4A, NS5A and the mature core protein. Interacts with host NEURL3; this interaction prevents E1 binding to glycoprotein E2. In terms of assembly, forms a heterodimer with envelope glycoprotein E1. Interacts with host CD81 and SCARB1 receptors; these interactions play a role in viral entry into host cell. Interacts with host EIF2AK2/PKR; this interaction inhibits EIF2AK2 and probably allows the virus to evade the innate immune response. Interacts with host CD209/DC-SIGN and CLEC4M/DC-SIGNR. Interact with host SPCS1; this interaction is essential for viral particle assembly. Interacts with protease NS2. The heterodimer E1/E2 interacts with host CLDN1; this interaction plays a role in viral entry into host cell. Part of the viral assembly initiation complex composed of NS2, E1, E2, NS3, NS4A, NS5A and the mature core protein. Interacts with host SLC3A2/4F2hc; the interaction may facilitate viral entry into host cell. Interacts with human PLSCR1. Homohexamer. Homoheptamer. Interacts with protease NS2. As to quaternary structure, homodimer. Interacts with host SPCS1; this interaction is essential for viral particle assembly. Interacts with envelope glycoprotein E1. Interacts with envelope glycoprotein E2. Interacts with viroporin p7. Interacts with serine protease/helicase NS3. Part of the replication complex composed of NS2, NS3, NS4A, NS4B, NS5A and the RNA-directed RNA polymerase embedded in an ER-derived membranous web. Part of the viral assembly initiation complex composed of NS2, E1, E2, NS3, NS4A, NS5A and the mature core protein. In terms of assembly, interacts with protease NS2. Interacts with non-structural protein 4A; this interaction stabilizes the folding of NS3 serine protease. NS3-NS4A interaction is essential for NS3 activation and allows membrane anchorage of the latter. NS3/NS4A complex also prevents phosphorylation of host IRF3, thus preventing the establishment of dsRNA induced antiviral state. Interacts with host MAVS; this interaction leads to the cleavage and inhibition of host MAVS. Interacts with host TICAM1; this interaction leads to the cleavage and inhibition of host TICAM1. Interacts with host TANK-binding kinase/TBK1; this interaction results in the inhibition of the association between TBK1 and IRF3, which leads to the inhibition of IRF3 activation. Interacts with host RBM24. Part of the replication complex composed of NS2, NS3, NS4A, NS4B, NS5A and the RNA-directed RNA polymerase embedded in an ER-derived membranous web. Part of the viral assembly initiation complex composed of NS2, E1, E2, NS3, NS4A, NS5A and the mature core protein. Interacts with NS3 serine protease; this interaction stabilizes the folding of NS3 serine protease. NS3-NS4A interaction is essential for NS3 activation and allows membrane anchorage of the latter. Interacts with non-structural protein 5A (via N-terminus). Part of the replication complex composed of NS2, NS3, NS4A, NS4B, NS5A and the RNA-directed RNA polymerase embedded in an ER-derived membranous web. Part of the viral assembly initiation complex composed of NS2, E1, E2, NS3, NS4A, NS5A and the mature core protein. As to quaternary structure, homomultimer. Interacts with non-structural protein NS5A. Interacts with host PLA2G4C; this interaction likely initiates the recruitment of replication complexes to lipid droplets. Interacts with host STING; this interaction disrupts the interaction between STING and TBK1 thereby suppressing the interferon signaling. Part of the replication complex composed of NS2, NS3, NS4A, NS4B, NS5A and the RNA-directed RNA polymerase embedded in an ER-derived membranous web. In terms of assembly, monomer. Homodimer; dimerization is required for RNA-binding. Interacts with the mature core protein. Interacts (via N-terminus) with non-structural protein 4A. Interacts with non-structural protein 4B. Interacts (via region D2) with RNA-directed RNA polymerase. Part of the viral assembly initiation complex composed of NS2, E1, E2, NS3, NS4A, NS5A and the mature core protein. Part of the replication complex composed of NS2, NS3, NS4A, NS4B, NS5A and the RNA-directed RNA polymerase embedded in an ER-derived membranous web. Interacts with host GRB2. Interacts with host BIN1. Interacts with host PIK3R1. Interacts with host SRCAP. Interacts with host FKBP8. Interacts (via C-terminus) with host VAPB (via MSP domain). Interacts with host EIF2AK2/PKR; this interaction leads to disruption of EIF2AK2 dimerization by NS5A and probably allows the virus to evade the innate immune response. Interacts (via N-terminus) with host PACSIN2 (via N-terminus); this interaction attenuates protein kinase C alpha-mediated phosphorylation of PACSIN2 by disrupting the interaction between PACSIN2 and PRKCA. Interacts (via N-terminus) with host SRC kinase (via SH2 domain). Interacts with most Src-family kinases. Interacts with host IFI27 and SKP2; promotes the ubiquitin-mediated proteasomal degradation of NS5A. Interacts with host GPS2. Interacts with host TNFRSF21; this interaction allows the modulation by the virus of JNK, p38 MAPK, STAT3, and Akt signaling pathways in a DR6-dependent manner. Interacts (via N-terminus) with host CIDEB (via N-terminus); this interaction seems to regulate the association of HCV particles with APOE. Interacts with host CHKA/Choline Kinase-alpha; CHKA bridges host PI4KA and NS5A and potentiates NS5A-stimulated PI4KA activity, which then facilitates the targeting of the ternary complex to the ER for viral replication. Interacts with host SPSB2 (via C-terminus); this interaction targets NS5A for ubiquitination and degradation. Interacts with host RAB18; this interaction may promote the association of NS5A and other replicase components with lipid droplets. Interacts (via region D2) with host PPIA/CYPA; the interaction stimulates RNA-binding ability of NS5A and is dependent on the peptidyl-prolyl cis-trans isomerase activity of PPIA/CYPA. Interacts with host TRIM14; this interaction induces the degradation of NS5A. Homooligomer. Interacts with non-structural protein 5A. Interacts with host VAPB. Interacts with host PRK2/PKN2. Interacts with host HNRNPA1 and SEPT6; these interactions facilitate viral replication. Part of the replication complex composed of NS2, NS3, NS4A, NS4B, NS5A and the RNA-directed RNA polymerase. Requires Zn(2+) as cofactor. Mg(2+) is required as a cofactor. Post-translationally, specific enzymatic cleavages in vivo yield mature proteins. The structural proteins, core, E1, E2 and p7 are produced by proteolytic processing by host signal peptidases. The core protein precursor is synthesized as a 23 kDa, which is retained in the ER membrane through the hydrophobic signal peptide. Cleavage by the signal peptidase releases the 21 kDa mature core protein. The cleavage of the core protein precursor occurs between aminoacids 176 and 188 but the exact cleavage site is not known. Some degraded forms of the core protein appear as well during the course of infection. The other proteins (p7, NS2, NS3, NS4A, NS4B, NS5A and NS5B) are cleaved by the viral proteases. Autoprocessing between NS2 and NS3 is mediated by the NS2 cysteine protease catalytic domain and regulated by the NS3 N-terminal domain. In terms of processing, phosphorylated by host PKC and PKA. Ubiquitinated; mediated by UBE3A and leading to core protein subsequent proteasomal degradation. Post-translationally, highly N-glycosylated. In terms of processing, palmitoylation is required for NS2/3 autoprocessing and E2 recruitment to membranes. Palmitoylated. This modification may play a role in its polymerization or in protein-protein interactions. Post-translationally, phosphorylated on serines in a basal form termed p56. p58 is a hyperphosphorylated form of p56. p56 and p58 coexist in the cell in roughly equivalent amounts. Hyperphosphorylation is dependent on the presence of NS4A. Host CSNK1A1/CKI-alpha or RPS6KB1 kinases may be responsible for NS5A phosphorylation. In terms of processing, tyrosine phosphorylation is essential for the interaction with host SRC. Ubiquitinated. Ubiquitination, most probably at Lys-2350, mediated by host IFI27 and SKP2 leads to proteasomal degradation, restricting viral infection. Ubiquitination by host TRIM22 leads to interruption of viral replication. Post-translationally, the N-terminus is phosphorylated by host PRK2/PKN2.

It localises to the host endoplasmic reticulum membrane. Its subcellular location is the host mitochondrion membrane. The protein localises to the virion. The protein resides in the host cytoplasm. It is found in the host nucleus. It localises to the host lipid droplet. Its subcellular location is the virion membrane. The protein localises to the host mitochondrion. The protein resides in the host cell membrane. It is found in the host perinuclear region. It carries out the reaction Hydrolysis of four peptide bonds in the viral precursor polyprotein, commonly with Asp or Glu in the P6 position, Cys or Thr in P1 and Ser or Ala in P1'.. It catalyses the reaction a ribonucleoside 5'-triphosphate + H2O = a ribonucleoside 5'-diphosphate + phosphate + H(+). The enzyme catalyses ATP + H2O = ADP + phosphate + H(+). The catalysed reaction is RNA(n) + a ribonucleoside 5'-triphosphate = RNA(n+1) + diphosphate. Its activity is regulated as follows. Inhibited by the antiviral drug hexamethylene amiloride. Inhibition by amantadine appears to be genotype-dependent. Also inhibited by long-alkyl-chain iminosugar derivatives. Activity is up-regulated by PRK2/PKN2-mediated phosphorylation. Packages viral RNA to form a viral nucleocapsid, and promotes virion budding. Participates in the viral particle production as a result of its interaction with the non-structural protein 5A. Binds RNA and may function as a RNA chaperone to induce the RNA structural rearrangements taking place during virus replication. Modulates viral translation initiation by interacting with viral IRES and 40S ribosomal subunit. Affects various cell signaling pathways, host immunity and lipid metabolism. Prevents the establishment of cellular antiviral state by blocking the interferon-alpha/beta (IFN-alpha/beta) and IFN-gamma signaling pathways and by blocking the formation of phosphorylated STAT1 and promoting ubiquitin-mediated proteasome-dependent degradation of STAT1. Activates STAT3 leading to cellular transformation. Regulates the activity of cellular genes, including c-myc and c-fos. May repress the promoter of p53, and sequester CREB3 and SP110 isoform 3/Sp110b in the cytoplasm. Represses cell cycle negative regulating factor CDKN1A, thereby interrupting an important check point of normal cell cycle regulation. Targets transcription factors involved in the regulation of inflammatory responses and in the immune response: suppresses TNF-induced NF-kappa-B activation, and activates AP-1. Binds to dendritic cells (DCs) via C1QR1, resulting in down-regulation of T-lymphocytes proliferation. Alters lipid metabolism by interacting with hepatocellular proteins involved in lipid accumulation and storage. Induces up-regulation of FAS promoter activity, and thereby contributes to the increased triglyceride accumulation in hepatocytes (steatosis). Functionally, forms a heterodimer with envelope glycoprotein E2, which mediates virus attachment to the host cell, virion internalization through clathrin-dependent endocytosis and fusion with host membrane. Fusion with the host cell is most likely mediated by both E1 and E2, through conformational rearrangements of the heterodimer required for fusion rather than a classical class II fusion mechanism. E1/E2 heterodimer binds host apolipoproteins such as APOB and ApoE thereby forming a lipo-viro-particle (LVP). APOE associated to the LVP allows the initial virus attachment to cell surface receptors such as the heparan sulfate proteoglycans (HSPGs), syndecan-1 (SDC1), syndecan-1 (SDC2), the low-density lipoprotein receptor (LDLR) and scavenger receptor class B type I (SCARB1). The cholesterol transfer activity of SCARB1 allows E2 exposure and binding of E2 to SCARB1 and the tetraspanin CD81. E1/E2 heterodimer binding on CD81 activates the epithelial growth factor receptor (EGFR) signaling pathway. Diffusion of the complex E1-E2-EGFR-SCARB1-CD81 to the cell lateral membrane allows further interaction with Claudin 1 (CLDN1) and occludin (OCLN) to finally trigger HCV entry. In terms of biological role, forms a heterodimer with envelope glycoprotein E1, which mediates virus attachment to the host cell, virion internalization through clathrin-dependent endocytosis and fusion with host membrane. Fusion with the host cell is most likely mediated by both E1 and E2, through conformational rearrangements of the heterodimer required for fusion rather than a classical class II fusion mechanism. The interaction between envelope glycoprotein E2 and host apolipoprotein E/APOE allows the proper assembly, maturation and infectivity of the viral particles. This interaction is probably promoted via the up-regulation of cellular autophagy by the virus. E1/E2 heterodimer binds host apolipoproteins such as APOB and APOE thereby forming a lipo-viro-particle (LVP). APOE associated to the LVP allows the initial virus attachment to cell surface receptors such as the heparan sulfate proteoglycans (HSPGs), syndecan-1 (SDC1), syndecan-1 (SDC2), the low-density lipoprotein receptor (LDLR) and scavenger receptor class B type I (SCARB1). The cholesterol transfer activity of SCARB1 allows E2 exposure and binding of E2 to SCARB1 and the tetraspanin CD81. E1/E2 heterodimer binding on CD81 activates the epithelial growth factor receptor (EGFR) signaling pathway. Diffusion of the complex E1-E2-EGFR-SCARB1-CD81 to the cell lateral membrane allows further interaction with Claudin 1 (CLDN1) and occludin (OCLN) to finally trigger HCV entry. Inhibits host EIF2AK2/PKR activation, preventing the establishment of an antiviral state. Viral ligand for CD209/DC-SIGN and CLEC4M/DC-SIGNR, which are respectively found on dendritic cells (DCs), and on liver sinusoidal endothelial cells and macrophage-like cells of lymph node sinuses. These interactions allow the capture of circulating HCV particles by these cells and subsequent facilitated transmission to permissive cells such as hepatocytes and lymphocyte subpopulations. The interaction between E2 and host amino acid transporter complex formed by SLC3A2 and SLC7A5/LAT1 may facilitate viral entry into host cell. Its function is as follows. Ion channel protein that acts as a viroporin and plays an essential role in the assembly, envelopment and secretion of viral particles. Regulates the host cell secretory pathway, which induces the intracellular retention of viral glycoproteins and favors assembly of viral particles. Creates a pore in acidic organelles and releases Ca(2+) and H(+) in the cytoplasm of infected cells, leading to a productive viral infection. High levels of cytoplasmic Ca(2+) may trigger membrane trafficking and transport of viral ER-associated proteins to viroplasms, sites of viral genome replication. This ionic imbalance induces the assembly of the inflammasome complex, which triggers the maturation of pro-IL-1beta into IL-1beta through the action of caspase-1. Targets also host mitochondria and induces mitochondrial depolarization. In addition of its role as a viroporin, acts as a lipid raft adhesion factor. Cysteine protease required for the proteolytic auto-cleavage between the non-structural proteins NS2 and NS3. The N-terminus of NS3 is required for the function of NS2 protease (active region NS2-3). Promotes the initiation of viral particle assembly by mediating the interaction between structural and non-structural proteins. Functionally, displays three enzymatic activities: serine protease with a chymotrypsin-like fold, NTPase and RNA helicase. NS3 serine protease, in association with NS4A, is responsible for the cleavages of NS3-NS4A, NS4A-NS4B, NS4B-NS5A and NS5A-NS5B. The NS3/NS4A complex prevents phosphorylation of host IRF3, thus preventing the establishment of dsRNA induced antiviral state. The NS3/NS4A complex induces host amino acid transporter component SLC3A2, thus contributing to HCV propagation. NS3 RNA helicase binds to RNA and unwinds both dsDNA and dsRNA in the 3' to 5' direction, and likely resolves RNA complicated stable secondary structures in the template strand. Binds a single ATP and catalyzes the unzipping of a single base pair of dsRNA. Inhibits host antiviral proteins TBK1 and IRF3 thereby preventing the establishment of an antiviral state. Cleaves host MAVS/CARDIF thereby preventing the establishment of an antiviral state. Cleaves host TICAM1/TRIF, thereby disrupting TLR3 signaling and preventing the establishment of an antiviral state. In terms of biological role, peptide cofactor which forms a non-covalent complex with the N-terminal of NS3 serine protease. The NS3/NS4A complex prevents phosphorylation of host IRF3, thus preventing the establishment of dsRNA induced antiviral state. The NS3/NS4A complex induces host amino acid transporter component SLC3A2, thus contributing to HCV propagation. Its function is as follows. Induces a specific membrane alteration that serves as a scaffold for the virus replication complex. This membrane alteration gives rise to the so-called ER-derived membranous web that contains the replication complex. NS4B self-interaction contributes to its function in membranous web formation. Promotes host TRIF protein degradation in a CASP8-dependent manner thereby inhibiting host TLR3-mediated interferon signaling. Disrupts the interaction between STING and TBK1 contributing to the inhibition of interferon signaling. Phosphorylated protein that is indispensable for viral replication and assembly. Both hypo- and hyperphosphorylated states are required for the viral life cycle. The hyperphosphorylated form of NS5A is an inhibitor of viral replication. Involved in RNA-binding and especially in binding to the viral genome. Zinc is essential for RNA-binding. Participates in the viral particle production as a result of its interaction with the mature viral core protein. Its interaction with host VAPB may target the viral replication complex to vesicles. Down-regulates viral IRES translation initiation. Mediates interferon resistance, presumably by interacting with and inhibiting host EIF2AK2/PKR. Prevents BIN1-induced apoptosis. Acts as a transcriptional activator of some host genes important for viral replication when localized in the nucleus. Via the interaction with host PACSIN2, modulates lipid droplet formation in order to promote virion assembly. Modulates TNFRSF21/DR6 signaling pathway for viral propagation. Functionally, RNA-dependent RNA polymerase that performs primer-template recognition and RNA synthesis during viral replication. Initiates RNA transcription/replication at a flavin adenine dinucleotide (FAD), resulting in a 5'- FAD cap on viral RNAs. In this way, recognition of viral 5' RNA by host pattern recognition receptors can be bypassed, thereby evading activation of antiviral pathways. The chain is Genome polyprotein from Homo sapiens (Human).